A 342-amino-acid chain; its full sequence is Glycerol-3-phosphate dehydrogenase [NAD(P)+] (342 aa).

Residues W11, R31, and K102 each coordinate NADPH. Sn-glycerol 3-phosphate is bound by residues K102 and G132. NADPH is bound at residue A136. 5 residues coordinate sn-glycerol 3-phosphate: K187, D240, S250, R251, and N252. K187 functions as the Proton acceptor in the catalytic mechanism. R251 serves as a coordination point for NADPH. Residue E277 participates in NADPH binding.

This sequence belongs to the NAD-dependent glycerol-3-phosphate dehydrogenase family.

Its subcellular location is the cytoplasm. The enzyme catalyses sn-glycerol 3-phosphate + NAD(+) = dihydroxyacetone phosphate + NADH + H(+). It catalyses the reaction sn-glycerol 3-phosphate + NADP(+) = dihydroxyacetone phosphate + NADPH + H(+). Its pathway is membrane lipid metabolism; glycerophospholipid metabolism. Functionally, catalyzes the reduction of the glycolytic intermediate dihydroxyacetone phosphate (DHAP) to sn-glycerol 3-phosphate (G3P), the key precursor for phospholipid synthesis. This chain is Glycerol-3-phosphate dehydrogenase [NAD(P)+], found in Symbiobacterium thermophilum (strain DSM 24528 / JCM 14929 / IAM 14863 / T).